The sequence spans 724 residues: 4-alpha-glucanotransferase (724 aa).

The protein belongs to the disproportionating enzyme family.

It localises to the cytoplasm. It catalyses the reaction Transfers a segment of a (1-&gt;4)-alpha-D-glucan to a new position in an acceptor, which may be glucose or a (1-&gt;4)-alpha-D-glucan.. The chain is 4-alpha-glucanotransferase (malQ) from Mycobacterium bovis (strain ATCC BAA-935 / AF2122/97).